Here is a 1156-residue protein sequence, read N- to C-terminus: Nitric oxide synthase, inducible (1156 aa).

Positions 23 to 27 match the DINNN-motif; mediates interaction with SPSB1, SPSB2 and SPSB4 motif; the sequence is DINNN. The segment at 27–84 is disordered; that stretch reads NVGKFYQPPSSPVTQDDPKRHSPGKHGNESPQPLTGTVKTSPESLSKLDAPPSACPRH. Over residues 55-70 the composition is skewed to polar residues; sequence ESPQPLTGTVKTSPES. Residues Cys110 and Cys115 each coordinate Zn(2+). Position 118 (Ser118) interacts with (6R)-L-erythro-5,6,7,8-tetrahydrobiopterin. Heme b is bound at residue Cys200. L-arginine contacts are provided by Gln263, Trp372, Tyr373, and Glu377. Positions 381, 462, 463, and 476 each coordinate (6R)-L-erythro-5,6,7,8-tetrahydrobiopterin. Tyr491 serves as a coordination point for heme b. The calmodulin-binding stretch occupies residues 515 to 535; the sequence is FKVLVKAVFFASVLMHKAMAS. Residues 539 to 677 form the Flavodoxin-like domain; it reads ATILFATETG…AFRSWAVQTF (139 aa). Thr545, Glu546, Thr547, Arg549, and Ser550 together coordinate FMN. Residue Tyr575 is modified to Phosphotyrosine. Residues Ser591, Thr592, Ser628, Cys635, Glu661, and Gln665 each contribute to the FMN site. In terms of domain architecture, FAD-binding FR-type spans 730–970; it reads KHVFTMRLKS…VRSASGFQLP (241 aa). Arg750 serves as a coordination point for NADP(+). Residues His772, Arg906, Tyr908, Ser909, Thr924, and Ala926 each contribute to the FAD site. Thr929 provides a ligand contact to NADP(+). Positions 930, 943, 944, and 945 each coordinate FAD. Thr984, Arg1017, Ser1046, Arg1047, Lys1053, Tyr1055, Gln1057, and Asp1090 together coordinate NADP(+).

It belongs to the NOS family. In terms of assembly, homodimer. Interacts with NHERF1. Interacts with GAPDH; induced by oxidatively-modified low-densitity lipoprotein (LDL(ox)). Interacts with S100A8 and S100A9 to form the iNOS-S100A8/9 transnitrosylase complex. Interacts with SPSB1, SPSB2 and SPSB4. Interacts with ELOC and CUL5 in the presence of SPSB1 or SPSB2 or SPSB4. Forms a complex with ASL, ASS1 and HSP90AA1; the complex regulates cell-autonomous L-arginine synthesis and citrulline recycling while channeling extracellular L-arginine to nitric oxide synthesis pathway. Heme b serves as cofactor. FAD is required as a cofactor. Requires FMN as cofactor. It depends on (6R)-L-erythro-5,6,7,8-tetrahydrobiopterin as a cofactor. Post-translationally, polyubiquitinated; mediated by SPSB1, SPSB2 and SPSB4, leading to proteasomal degradation.

It localises to the cytoplasm. The protein resides in the cytosol. It carries out the reaction 2 L-arginine + 3 NADPH + 4 O2 + H(+) = 2 L-citrulline + 2 nitric oxide + 3 NADP(+) + 4 H2O. With respect to regulation, regulated by calcium/calmodulin. Produces nitric oxide (NO) which is a messenger molecule with diverse functions throughout the body. In macrophages, NO mediates tumoricidal and bactericidal actions. Also has nitrosylase activity and mediates cysteine S-nitrosylation of cytoplasmic target proteins such PTGS2/COX2. As component of the iNOS-S100A8/9 transnitrosylase complex involved in the selective inflammatory stimulus-dependent S-nitrosylation of GAPDH implicated in regulation of the GAIT complex activity and probably multiple targets including ANXA5, EZR, MSN and VIM. Involved in inflammation, enhances the synthesis of pro-inflammatory mediators such as IL6 and IL8. This is Nitric oxide synthase, inducible (NOS2) from Bos taurus (Bovine).